The sequence spans 529 residues: PTS system alpha-glucoside-specific EIICB component (529 aa).

The 416-residue stretch at 1 to 416 (MMKKVQRFGG…MDLKTPGRED (416 aa)) folds into the PTS EIIC type-1 domain. 12 consecutive transmembrane segments (helical) span residues 8–28 (FGGAMMAPVLLFAFTGIVVGL), 59–79 (GWTVFRQMPILFAIGLPISLA), 91–111 (FALYTTFNYFVAAILKVFYGI), 130–150 (VPTLDTNLFGGILIAALVVYL), 170–190 (VFVYIVGFVVMIPCAFLTVLI), 198–218 (ISALQGFMKASGIFGVWIYTF), 222–242 (ILIPTGLHHFVYTPFVFGPAA), 272–292 (GGFALHGNSKIFGAPGIALAM), 304–324 (VAALLIPIIFTAVISGITEPL), 328–348 (FLFIAPVLFAVHACLAATMAA), 352–372 (AFGVVGNMGGGLLDFFFLNWI), and 380–400 (GTVIAQIVIGLIFTAIYFVVF). The region spanning 450 to 529 (AQKGAIILEA…ERIEEMMKKG (80 aa)) is the PTS EIIB type-1 domain. Cysteine 472 (phosphocysteine intermediate; for EIIB activity) is an active-site residue.

It is found in the cell membrane. Functionally, the phosphoenolpyruvate-dependent sugar phosphotransferase system (sugar PTS), a major carbohydrate active -transport system, catalyzes the phosphorylation of incoming sugar substrates concomitantly with their translocation across the cell membrane. This system is probably involved in transport of the alpha-glucosides trehalulose, turanose, maltulose and palatinose. The chain is PTS system alpha-glucoside-specific EIICB component from Leptotrichia buccalis (strain ATCC 14201 / DSM 1135 / JCM 12969 / NCTC 10249 / C-1013-b).